The following is a 74-amino-acid chain: Cytochrome c oxidase assembly factor 5 (74 aa).

In terms of domain architecture, CHCH spans 27-65 (QSDCVVQEGKSPRQCLKEGYCNSLKYAFFECKRSVLDNR). A Cx10C motif motif is present at residues 30-41 (CVVQEGKSPRQC). Disulfide bonds link Cys-30–Cys-57 and Cys-41–Cys-47. At Ser-37 the chain carries Phosphoserine. The Cx9C motif motif lies at 47 to 57 (CNSLKYAFFEC).

The protein belongs to the PET191 family.

Its function is as follows. Involved in an early step of the mitochondrial complex IV assembly process. This chain is Cytochrome c oxidase assembly factor 5 (COA5), found in Homo sapiens (Human).